Here is a 112-residue protein sequence, read N- to C-terminus: Small capsomere-interacting protein (112 aa).

Belongs to the herpesviridae small capsomere-interacting protein family. In terms of assembly, interacts with the major capsid protein/MCP. Interacts with host TSPAN7; this interaction may be responsible for the presence of TSPAN7 in extracellular virions. Interacts with host MAPRE3 and DYNLT1; these interactions mediate retrograde transport of viral capsids.

It localises to the virion. Its subcellular location is the host nucleus. Participates in the assembly of the infectious particles by decorating the outer surface of the capsid shell and thus forming a layer between the capsid and the tegument. Complexes composed of the major capsid protein and small capsomere-interacting protein/SCP assemble together in the host cytoplasm and are translocated to the nucleus, where they accumulate and participate in capsid assembly. Interaction with host dynein light chains suggests a possible function in the retrogarde transport of incoming viral capsids. This is Small capsomere-interacting protein from Human herpesvirus 1 (strain 17) (HHV-1).